The following is a 172-amino-acid chain: Translation initiation factor IF-3 (172 aa).

It belongs to the IF-3 family. As to quaternary structure, monomer.

The protein resides in the cytoplasm. Functionally, IF-3 binds to the 30S ribosomal subunit and shifts the equilibrium between 70S ribosomes and their 50S and 30S subunits in favor of the free subunits, thus enhancing the availability of 30S subunits on which protein synthesis initiation begins. This chain is Translation initiation factor IF-3, found in Campylobacter jejuni subsp. doylei (strain ATCC BAA-1458 / RM4099 / 269.97).